The chain runs to 574 residues: MDADSINSFFLIGALLTAVSVLLSPMSSRLGIPILLIFLAVGILAGEDGPGGILFDDYSTAYLVSNFALAIILLDGGMRTRVASFRVALWPALSLATFGVAITTSITGVMAAWLFDLHWLQGLLVGAIVGSTDAAAVFSLLKGRSLNERVGATLEIESGSNDPMAVFLTVTLIAILANVGAELSASFMLISFIKQFGLGVLLGLGGGWLLWKLVNVSKLAEGLYSILVLSGGLMIYATSNKLGGSGILSIYLVGLFLGNKPTRGRHAILNVLDGMTWVSQIGMFLVLGLLLTPSDLLDIWLPGLALAFGMILFARPLAVWLSLLPFKSFGSRDRWFISWVGLRGAVPIILAVFPMMAGLPGAQLYFNLAFFVVIVSLLVQGASLTTAARLAKVELPPKPLPISRSGVEIYPKSEWEVFVYCLSESKWCIGEPLKRLAMPDGTRIAAVFRNNTLLHPSGSTCLEAGDILCVLGQEKSLEALSNLFSQAPETDEVSRFFGDFFIDTEVKLADLAPIYGLTLDDETGAMTVADLVALELGAHPVLGDQFLWQSLHWVVAGLYEGKVTNVGIRLPADA.

13 helical membrane-spanning segments follow: residues 6 to 26 (INSF…LSPM), 34 to 54 (ILLI…GGIL), 58 to 78 (YSTA…DGGM), 87 to 107 (VALW…TSIT), 109 to 129 (VMAA…GAIV), 173 to 193 (IAIL…ISFI), 196 to 216 (FGLG…LVNV), 219 to 239 (LAEG…YATS), 242 to 262 (LGGS…NKPT), 271 to 291 (VLDG…GLLL), 299 to 319 (IWLP…PLAV), 335 to 355 (WFIS…VFPM), and 359 to 379 (LPGA…SLLV). The region spanning 405–486 (SGVEIYPKSE…LEALSNLFSQ (82 aa)) is the RCK C-terminal domain.

The protein belongs to the monovalent cation:proton antiporter 1 (CPA1) transporter (TC 2.A.36) family. NhaP2 subfamily.

Its subcellular location is the cell inner membrane. It catalyses the reaction K(+)(in) + H(+)(out) = K(+)(out) + H(+)(in). K(+)/H(+) antiporter that extrudes potassium in exchange for external protons and maintains the internal concentration of potassium under toxic levels. The sequence is that of K(+)/H(+) antiporter NhaP2 from Shewanella oneidensis (strain ATCC 700550 / JCM 31522 / CIP 106686 / LMG 19005 / NCIMB 14063 / MR-1).